Reading from the N-terminus, the 594-residue chain is Neuronal PAS domain-containing protein 1 (594 aa).

The bHLH domain maps to 45-98 (QRKEKSRNAARWRRGKENLEFFELAKLLPLPGAISSQLDKASIVRLSVTYLRLR). Residues 135-205 (EQHLGGHILQ…EQLGLRAASI (71 aa)) enclose the PAS 1 domain. A disordered region spans residues 206-237 (GPPTPPSVSSSSSSSSSSLVDTPEIEASPTEA). The span at 212–223 (SVSSSSSSSSSS) shows a compositional bias: low complexity. Residues 294–360 (APLAELPLHG…IRQSHLDLLD (67 aa)) form the PAS 2 domain. The PAC domain maps to 366–409 (TGYYRWLQRAGGFVWLQSVATVAGNGKSTGEHHVLWVSHVLSNA). A disordered region spans residues 427-498 (QEEPSRPGPE…DPPAPPRPEF (72 aa)). Positions 453–480 (DQDKDKDPQARGKRIKVEASPKEARGSE) are enriched in basic and acidic residues.

In terms of assembly, efficient DNA binding requires dimerization with another bHLH protein. Interacts with ARNT; forms a heterodimer that binds core DNA sequence 5'-[AG]CGTG-3' within the hypoxia response element (HRE) leading to a transcriptional repressor on its target gene TH. Expressed in brain in inhibitory interneurons. Also found in spinal cord.

Its subcellular location is the nucleus. Its function is as follows. May control regulatory pathways relevant to schizophrenia and to psychotic illness. May play a role in late central nervous system development by modulating EPO expression in response to cellular oxygen level. Forms a heterodimer that binds core DNA sequence 5'-TACGTG-3' within the hypoxia response element (HRE) leading to transcriptional repression on its target gene TH. This Mus musculus (Mouse) protein is Neuronal PAS domain-containing protein 1 (Npas1).